The chain runs to 292 residues: tRNA pseudouridine synthase B (292 aa).

Asp-38 functions as the Nucleophile in the catalytic mechanism.

The protein belongs to the pseudouridine synthase TruB family. Type 1 subfamily.

It carries out the reaction uridine(55) in tRNA = pseudouridine(55) in tRNA. Responsible for synthesis of pseudouridine from uracil-55 in the psi GC loop of transfer RNAs. This is tRNA pseudouridine synthase B from Gloeobacter violaceus (strain ATCC 29082 / PCC 7421).